The sequence spans 171 residues: ATP synthase subunit b (171 aa).

A helical membrane pass occupies residues 13 to 33 (GVEWGTTFVTLVTFVILIILL).

It belongs to the ATPase B chain family. As to quaternary structure, F-type ATPases have 2 components, F(1) - the catalytic core - and F(0) - the membrane proton channel. F(1) has five subunits: alpha(3), beta(3), gamma(1), delta(1), epsilon(1). F(0) has three main subunits: a(1), b(2) and c(10-14). The alpha and beta chains form an alternating ring which encloses part of the gamma chain. F(1) is attached to F(0) by a central stalk formed by the gamma and epsilon chains, while a peripheral stalk is formed by the delta and b chains.

The protein localises to the cell membrane. In terms of biological role, f(1)F(0) ATP synthase produces ATP from ADP in the presence of a proton or sodium gradient. F-type ATPases consist of two structural domains, F(1) containing the extramembraneous catalytic core and F(0) containing the membrane proton channel, linked together by a central stalk and a peripheral stalk. During catalysis, ATP synthesis in the catalytic domain of F(1) is coupled via a rotary mechanism of the central stalk subunits to proton translocation. Component of the F(0) channel, it forms part of the peripheral stalk, linking F(1) to F(0). In Staphylococcus epidermidis (strain ATCC 12228 / FDA PCI 1200), this protein is ATP synthase subunit b.